A 523-amino-acid polypeptide reads, in one-letter code: UPF0329 protein ECU02_0050 (523 aa).

The segment at 326–386 (EEKAKSKKRG…KTGKKSEGGR (61 aa)) is disordered. A compositionally biased stretch (basic residues) spans 330–339 (KSKKRGKRKS). Over residues 344–353 (EAKEEEKKES) the composition is skewed to basic and acidic residues. A compositionally biased stretch (acidic residues) spans 354–368 (ETEEVEAGEEVEMPS).

Belongs to the UPF0329 family.

This Encephalitozoon cuniculi (strain GB-M1) (Microsporidian parasite) protein is UPF0329 protein ECU02_0050.